Reading from the N-terminus, the 378-residue chain is MAEFVRAEVLGTKFEYTTRYVNPQPIGMGSFGLVCSAFDQITQQPVALKKIMKPFDSSSLAKRTYREIRLLKYLRHENLICMRDIFISPLEDIYIATELLGTDLGRLLSIKPLDSKFSQYFIYQILRGLKYIHSANVIHRDLKPTNILINENCDLKICDFGLARLQEPQMTGYVATRYYRAQEIMLTWQRYGVQVDVWSAGCILAEMLRRKPLFPGKDHVHQFHLITNILGNPPDAVIEKITSKNTVNFVKSLPSREPRDLSTVVPKDTDFDAIDLLKKMLVIDPDTRISAQDALRYPYLAPYHDPTDEPVASGPFDWSFDSADFPKETWKIMIYSEVLDYLNVDNPADPAPFDPSTPFDPSALEREFSEFLSDSGQI.

A Protein kinase domain is found at 20–300; it reads YVNPQPIGMG…AQDALRYPYL (281 aa). ATP contacts are provided by residues 26 to 34 and K49; that span reads IGMGSFGLV. Residue D141 is the Proton acceptor of the active site. T171 carries the phosphothreonine modification. The TXY signature appears at 171–173; it reads TGY. At Y173 the chain carries Phosphotyrosine.

It belongs to the protein kinase superfamily. Ser/Thr protein kinase family. MAP kinase subfamily. HOG1 sub-subfamily. Interacts with sakA upon osmotic and cell wall stresses. Mg(2+) serves as cofactor. In terms of processing, dually phosphorylated on Thr-171 and Tyr-173, which activates the enzyme.

The protein resides in the cytoplasm. It localises to the nucleus. The catalysed reaction is L-seryl-[protein] + ATP = O-phospho-L-seryl-[protein] + ADP + H(+). It carries out the reaction L-threonyl-[protein] + ATP = O-phospho-L-threonyl-[protein] + ADP + H(+). Its activity is regulated as follows. Activated by tyrosine and threonine phosphorylation. Functionally, mitogen-activated protein kinase; part of an osmotic and general signal pathways involved in regulation of the response to the cell wall damage, oxidative stress, drug resistance, and establishment of infection. Required for growth on media where sorbitol or mannitol is the sole carbon source. With sakA, plays a redundant or cooperative role in the conidial stress resistance. Also plays a supportive role in osmotic stress adaptation when sakA is deficient. Involved in paradoxical growth, the cell wall integrity (CWI) pathway and biofilm formation. Acts by modulating sakA activity upon exposure to several types o stresses and during cell wall biosynthesis. Also collaborates with sakA to allow ful virulence in a neutropenic murine model of invasive pulmonary aspergillosis. MpkC and sakA have both independent and collaborative functions during the transcriptional response to transient osmotic stress, and mpkC plays a major role in the modulation of the response to DNA metabolism while activating mitochondrial functions and cation transport. The polypeptide is Mitogen-activated protein kinase mpkC (mpkC) (Aspergillus fumigatus (strain ATCC MYA-4609 / CBS 101355 / FGSC A1100 / Af293) (Neosartorya fumigata)).